The sequence spans 23 residues: Defensin-like protein 2 (23 aa).

A Pyrrolidone carboxylic acid modification is found at glutamine 1.

It belongs to the DEFL family. Forms oligomers in its native state.

Its function is as follows. Possesses antifungal activity sensitive to inorganic cations. The polypeptide is Defensin-like protein 2 (Brassica napus (Rape)).